Reading from the N-terminus, the 162-residue chain is NADH-quinone oxidoreductase subunit I (162 aa).

2 4Fe-4S ferredoxin-type domains span residues 53–83 (LRRYPNGEERCIACKLCEAVCPALAITIESE) and 93–122 (TRYDIDLIKCIFCGFCEEACPVDAIVETRV). [4Fe-4S] cluster-binding residues include C63, C66, C69, C73, C102, C105, C108, and C112.

The protein belongs to the complex I 23 kDa subunit family. NDH-1 is composed of 14 different subunits. Subunits NuoA, H, J, K, L, M, N constitute the membrane sector of the complex. The cofactor is [4Fe-4S] cluster.

The protein localises to the cell inner membrane. It carries out the reaction a quinone + NADH + 5 H(+)(in) = a quinol + NAD(+) + 4 H(+)(out). In terms of biological role, NDH-1 shuttles electrons from NADH, via FMN and iron-sulfur (Fe-S) centers, to quinones in the respiratory chain. The immediate electron acceptor for the enzyme in this species is believed to be ubiquinone. Couples the redox reaction to proton translocation (for every two electrons transferred, four hydrogen ions are translocated across the cytoplasmic membrane), and thus conserves the redox energy in a proton gradient. The chain is NADH-quinone oxidoreductase subunit I from Nitrosomonas eutropha (strain DSM 101675 / C91 / Nm57).